The chain runs to 35 residues: Photosystem II reaction center protein M (35 aa).

The helical transmembrane segment at 5–25 threads the bilayer; that stretch reads ILAFIATALFILVPTAFLLII.

Belongs to the PsbM family. PSII is composed of 1 copy each of membrane proteins PsbA, PsbB, PsbC, PsbD, PsbE, PsbF, PsbH, PsbI, PsbJ, PsbK, PsbL, PsbM, PsbT, PsbX, PsbY, PsbZ, Psb30/Ycf12, at least 3 peripheral proteins of the oxygen-evolving complex and a large number of cofactors. It forms dimeric complexes.

It is found in the plastid. It localises to the chloroplast thylakoid membrane. Its function is as follows. One of the components of the core complex of photosystem II (PSII). PSII is a light-driven water:plastoquinone oxidoreductase that uses light energy to abstract electrons from H(2)O, generating O(2) and a proton gradient subsequently used for ATP formation. It consists of a core antenna complex that captures photons, and an electron transfer chain that converts photonic excitation into a charge separation. This subunit is found at the monomer-monomer interface. This is Photosystem II reaction center protein M from Amborella trichopoda.